Here is a 922-residue protein sequence, read N- to C-terminus: GPI inositol-deacylase (922 aa).

The Cytoplasmic segment spans residues Met1–Leu11. A helical transmembrane segment spans residues Ala12 to Phe32. Residues Glu33–Ala597 are Lumenal-facing. Ser174 is a catalytic residue. N-linked (GlcNAc...) asparagine glycans are attached at residues Asn363, Asn402, and Asn558. A helical transmembrane segment spans residues Leu598–Leu618. At Ser619–Pro641 the chain is on the cytoplasmic side. Residues Phe642–Val662 form a helical membrane-spanning segment. Residues Leu663–Asp668 are Lumenal-facing. Residues Ala669 to Phe689 form a helical membrane-spanning segment. Topologically, residues Gly690–Ala694 are cytoplasmic. Residues Tyr695–Leu715 traverse the membrane as a helical segment. Residues Lys716–Pro733 are Lumenal-facing. Residues Val734–Leu754 traverse the membrane as a helical segment. Over Ser755–Ser817 the chain is Cytoplasmic. The disordered stretch occupies residues Asn776–Ala798. Basic residues predominate over residues Lys782–His793. A helical membrane pass occupies residues Thr818–Leu838. At Lys839–Val894 the chain is on the lumenal side. The chain crosses the membrane as a helical span at residues Ile895–Phe915. Over His916–Met922 the chain is Cytoplasmic.

Belongs to the GPI inositol-deacylase family.

It is found in the endoplasmic reticulum membrane. In terms of biological role, GPI inositol-deacylase that catalyzes the remove of the acyl chain linked to the 2-OH position of inositol ring from the GPI-anchored protein (GPI-AP) in the endoplasmic reticulum. Initiates the post-attachment remodeling phase of GPI-AP biogenesis and participates in endoplasmic reticulum (ER)-to-Golgi transport of GPI-anchored protein. The chain is GPI inositol-deacylase from Mus musculus (Mouse).